The sequence spans 265 residues: Ribosomal RNA large subunit methyltransferase E (265 aa).

S-adenosyl-L-methionine-binding residues include Gly-83, Trp-85, Asp-106, Asp-122, and Asp-146. Catalysis depends on Lys-186, which acts as the Proton acceptor. Residues 230-265 (KGREAGPPSGGSERPVDVSKDLSARSDSEGPGDAEG) form a disordered region. The span at 243-257 (RPVDVSKDLSARSDS) shows a compositional bias: basic and acidic residues.

The protein belongs to the class I-like SAM-binding methyltransferase superfamily. RNA methyltransferase RlmE family.

The protein resides in the cytoplasm. The catalysed reaction is uridine(2552) in 23S rRNA + S-adenosyl-L-methionine = 2'-O-methyluridine(2552) in 23S rRNA + S-adenosyl-L-homocysteine + H(+). Its function is as follows. Specifically methylates the uridine in position 2552 of 23S rRNA at the 2'-O position of the ribose in the fully assembled 50S ribosomal subunit. The chain is Ribosomal RNA large subunit methyltransferase E from Mesorhizobium japonicum (strain LMG 29417 / CECT 9101 / MAFF 303099) (Mesorhizobium loti (strain MAFF 303099)).